A 326-amino-acid polypeptide reads, in one-letter code: Virulence-associated V antigen (326 aa).

The protein localises to the secreted. In terms of biological role, possibly involved in calcium regulation of YOP expression, which includes the export process. In Yersinia pestis, this protein is Virulence-associated V antigen (lcrV).